A 543-amino-acid polypeptide reads, in one-letter code: Zinc finger CCCH-type with G patch domain-containing protein (543 aa).

2 disordered regions span residues 55-79 (AATS…DNPI) and 95-132 (TEDS…DKLD). A compositionally biased stretch (low complexity) spans 65-76 (DTAGRAPPATAD). Over residues 118 to 131 (DDDADNDDDADDKL) the composition is skewed to acidic residues. The C3H1-type zinc-finger motif lies at 186–209 (PCAYFLEGECRFTDEKCRYSHGEV). The segment at 272-304 (PFEDLLPLDEDEDGQEAAEDSESDTDGADEEEA) is disordered. The span at 277 to 304 (LPLDEDEDGQEAAEDSESDTDGADEEEA) shows a compositional bias: acidic residues. A G-patch domain is found at 335–381 (TRGIGSKIMQKMGYIVGTGLGREGEGIVVPVSAQVLPQGRSLDYCME). The disordered stretch occupies residues 438 to 460 (GAAGGESSRPNRNRPGALSRQEL).

It localises to the nucleus. Its function is as follows. Transcription repressor. The chain is Zinc finger CCCH-type with G patch domain-containing protein from Anopheles gambiae (African malaria mosquito).